We begin with the raw amino-acid sequence, 159 residues long: Cyclic pyranopterin monophosphate synthase (159 aa).

Substrate contacts are provided by residues L75–H77 and M113–E114. D128 is an active-site residue.

This sequence belongs to the MoaC family. As to quaternary structure, homohexamer; trimer of dimers.

It carries out the reaction (8S)-3',8-cyclo-7,8-dihydroguanosine 5'-triphosphate = cyclic pyranopterin phosphate + diphosphate. It functions in the pathway cofactor biosynthesis; molybdopterin biosynthesis. Functionally, catalyzes the conversion of (8S)-3',8-cyclo-7,8-dihydroguanosine 5'-triphosphate to cyclic pyranopterin monophosphate (cPMP). This Yersinia pseudotuberculosis serotype IB (strain PB1/+) protein is Cyclic pyranopterin monophosphate synthase.